Here is a 132-residue protein sequence, read N- to C-terminus: Small ribosomal subunit protein uS8 (132 aa).

The protein belongs to the universal ribosomal protein uS8 family. As to quaternary structure, part of the 30S ribosomal subunit. Contacts proteins S5 and S12.

One of the primary rRNA binding proteins, it binds directly to 16S rRNA central domain where it helps coordinate assembly of the platform of the 30S subunit. The protein is Small ribosomal subunit protein uS8 of Mycoplasmopsis pulmonis (strain UAB CTIP) (Mycoplasma pulmonis).